A 274-amino-acid polypeptide reads, in one-letter code: 2,3,4,5-tetrahydropyridine-2,6-dicarboxylate N-succinyltransferase (274 aa).

This sequence belongs to the transferase hexapeptide repeat family.

It localises to the cytoplasm. The catalysed reaction is (S)-2,3,4,5-tetrahydrodipicolinate + succinyl-CoA + H2O = (S)-2-succinylamino-6-oxoheptanedioate + CoA. It functions in the pathway amino-acid biosynthesis; L-lysine biosynthesis via DAP pathway; LL-2,6-diaminopimelate from (S)-tetrahydrodipicolinate (succinylase route): step 1/3. The chain is 2,3,4,5-tetrahydropyridine-2,6-dicarboxylate N-succinyltransferase from Salmonella heidelberg (strain SL476).